A 479-amino-acid chain; its full sequence is Bifunctional protein HldE (479 aa).

A ribokinase region spans residues 1 to 319; it reads MTVILPDFLK…NVVQKYEYTK (319 aa). 195–198 is a binding site for ATP; that stretch reads NMSE. Asp-264 is a catalytic residue. Residues 346–479 are cytidylyltransferase; the sequence is MTNGVFDILH…IDTMEINEIN (134 aa).

It in the N-terminal section; belongs to the carbohydrate kinase PfkB family. The protein in the C-terminal section; belongs to the cytidylyltransferase family. In terms of assembly, homodimer.

The enzyme catalyses D-glycero-beta-D-manno-heptose 7-phosphate + ATP = D-glycero-beta-D-manno-heptose 1,7-bisphosphate + ADP + H(+). The catalysed reaction is D-glycero-beta-D-manno-heptose 1-phosphate + ATP + H(+) = ADP-D-glycero-beta-D-manno-heptose + diphosphate. It participates in nucleotide-sugar biosynthesis; ADP-L-glycero-beta-D-manno-heptose biosynthesis; ADP-L-glycero-beta-D-manno-heptose from D-glycero-beta-D-manno-heptose 7-phosphate: step 1/4. Its pathway is nucleotide-sugar biosynthesis; ADP-L-glycero-beta-D-manno-heptose biosynthesis; ADP-L-glycero-beta-D-manno-heptose from D-glycero-beta-D-manno-heptose 7-phosphate: step 3/4. Functionally, catalyzes the phosphorylation of D-glycero-D-manno-heptose 7-phosphate at the C-1 position to selectively form D-glycero-beta-D-manno-heptose-1,7-bisphosphate. Its function is as follows. Catalyzes the ADP transfer from ATP to D-glycero-beta-D-manno-heptose 1-phosphate, yielding ADP-D-glycero-beta-D-manno-heptose. The polypeptide is Bifunctional protein HldE (Blochmanniella floridana).